Reading from the N-terminus, the 503-residue chain is Probable cytosol aminopeptidase (503 aa).

Residues Lys-274 and Asp-279 each coordinate Mn(2+). Lys-286 is a catalytic residue. Mn(2+)-binding residues include Asp-297, Asp-356, and Glu-358. Residue Arg-360 is part of the active site.

The protein belongs to the peptidase M17 family. The cofactor is Mn(2+).

The protein localises to the cytoplasm. It carries out the reaction Release of an N-terminal amino acid, Xaa-|-Yaa-, in which Xaa is preferably Leu, but may be other amino acids including Pro although not Arg or Lys, and Yaa may be Pro. Amino acid amides and methyl esters are also readily hydrolyzed, but rates on arylamides are exceedingly low.. It catalyses the reaction Release of an N-terminal amino acid, preferentially leucine, but not glutamic or aspartic acids.. Presumably involved in the processing and regular turnover of intracellular proteins. Catalyzes the removal of unsubstituted N-terminal amino acids from various peptides. This chain is Probable cytosol aminopeptidase, found in Burkholderia thailandensis (strain ATCC 700388 / DSM 13276 / CCUG 48851 / CIP 106301 / E264).